The sequence spans 119 residues: Large ribosomal subunit protein uL18 (119 aa).

The protein belongs to the universal ribosomal protein uL18 family. Part of the 50S ribosomal subunit; part of the 5S rRNA/L5/L18/L25 subcomplex. Contacts the 5S and 23S rRNAs.

This is one of the proteins that bind and probably mediate the attachment of the 5S RNA into the large ribosomal subunit, where it forms part of the central protuberance. This chain is Large ribosomal subunit protein uL18, found in Clostridium perfringens (strain 13 / Type A).